The following is a 355-amino-acid chain: Protein ECERIFERUM 16 (355 aa).

2 disordered regions span residues 1 to 60 and 296 to 315; these read MDSK…LPSN and HSSTEQFNKPGNPSDQKIHM. Basic residues predominate over residues 7 to 28; it reads AKSKRAHTLHHSKKSHSVHKPK. Polar residues-rich tracts occupy residues 41–53 and 296–310; these read QGNQTKSPVQSRR and HSSTEQFNKPGNPSD.

As to quaternary structure, interacts with RST1. As to expression, expressed in taproots, lateral roots, root tips, leaf veins, cauline leaves, inflorescences, flowers, and siliques.

Its subcellular location is the cytoplasm. It is found in the cytosol. The protein localises to the endoplasmic reticulum. Functionally, together with RST1, acts as a cofactor of the cytoplasmic exosome and connects the cytosolic RNA exosome to the SKI complex. Acts as a post-transcriptional gene silencing (PTGS) suppressor. CER16/RIPR can, like RST1 suppress the production of small interfering RNAs (siRNAs) from the CER3 locus, which is involved in cuticule membrane and wax production, and in the typhine and sporopollenin biosynthesis of pollen. This chain is Protein ECERIFERUM 16, found in Arabidopsis thaliana (Mouse-ear cress).